The primary structure comprises 128 residues: Ribosome-binding factor A (128 aa).

Belongs to the RbfA family. Monomer. Binds 30S ribosomal subunits, but not 50S ribosomal subunits or 70S ribosomes.

The protein resides in the cytoplasm. In terms of biological role, one of several proteins that assist in the late maturation steps of the functional core of the 30S ribosomal subunit. Associates with free 30S ribosomal subunits (but not with 30S subunits that are part of 70S ribosomes or polysomes). Required for efficient processing of 16S rRNA. May interact with the 5'-terminal helix region of 16S rRNA. In Rickettsia prowazekii (strain Madrid E), this protein is Ribosome-binding factor A.